A 179-amino-acid chain; its full sequence is UPF0227 protein VS_2073 (179 aa).

Belongs to the UPF0227 family.

The protein is UPF0227 protein VS_2073 of Vibrio atlanticus (strain LGP32) (Vibrio splendidus (strain Mel32)).